The sequence spans 418 residues: UDP-N-acetylglucosamine 1-carboxyvinyltransferase (418 aa).

Position 22–23 (22–23 (KN)) interacts with phosphoenolpyruvate. Arg-91 is a binding site for UDP-N-acetyl-alpha-D-glucosamine. Cys-115 functions as the Proton donor in the catalytic mechanism. Residue Cys-115 is modified to 2-(S-cysteinyl)pyruvic acid O-phosphothioketal. UDP-N-acetyl-alpha-D-glucosamine contacts are provided by Asp-305 and Ile-327.

Belongs to the EPSP synthase family. MurA subfamily.

It localises to the cytoplasm. The catalysed reaction is phosphoenolpyruvate + UDP-N-acetyl-alpha-D-glucosamine = UDP-N-acetyl-3-O-(1-carboxyvinyl)-alpha-D-glucosamine + phosphate. Its pathway is cell wall biogenesis; peptidoglycan biosynthesis. Functionally, cell wall formation. Adds enolpyruvyl to UDP-N-acetylglucosamine. The polypeptide is UDP-N-acetylglucosamine 1-carboxyvinyltransferase (Aeromonas salmonicida (strain A449)).